Here is a 279-residue protein sequence, read N- to C-terminus: Histone chaperone ASF1 (279 aa).

The tract at residues 1–143 (MSIVSLLGIK…HIVRNILAEK (143 aa)) is interaction with HIR1. The segment at 1–155 (MSIVSLLGIK…VTRFNIVWDN (155 aa)) is interaction with histone H3, histone H4, RAD53 and the RF-C complex. A disordered region spans residues 156 to 279 (ENEGDLYPPE…TPKDAARSTN (124 aa)). Positions 168-244 (GVDDEEEEDD…DEEEGEEEVG (77 aa)) are enriched in acidic residues. Residues 192 to 243 (DDQEDGEGEAEEAAEEEEEEEEKTEDNETNLEEEEEDIENSDGDEEEGEEEV) adopt a coiled-coil conformation. Composition is skewed to basic and acidic residues over residues 245–254 (SVDKNEDGND) and 269–279 (STPKDAARSTN).

This sequence belongs to the ASF1 family. As to quaternary structure, interacts with histone H3/H4 heterodimers via both histone H3 and histone H4. Binds with higher affinity to H3/H4 heterodimers where histone H3 has been pre-acetylated on 'Lys-14'. Interacts with RAD53 and this may impair interaction with histones and chromatin assembly; the interaction is reduced upon activation of DNA damage or replication checkpoints which in turn promotes histone binding and chromatin assembly. Interacts with the CAC2 subunit of chromatin assembly factor 1 (CAF-1). Interacts with the HIR1, HIR2, HIR3 and HPC2 subunits of the HIR complex. Interacts with the RFC1, RFC2, RFC3, RFC4 and RFC5 subunits of the replication factor C (RF-C/RFC) complex; which may recruit this protein to DNA. Interacts with the SAS2, SAS4 and SAS5 subunits of the SAS/SAS-I complex. Interacts with the BDF1, BDF2, SPT15, TAF1 and TAF7 subunits of the TFIID complex. Interacts with RTT109 and VPS75; the interaction with RTT109 is direct.

It localises to the nucleus. Functionally, histone chaperone that facilitates histone deposition and histone exchange and removal during nucleosome assembly and disassembly. Facilitates histone deposition through both replication-dependent and replication-independent chromatin assembly pathways. Cooperates with chromatin assembly factor 1 (CAF-1) to promote replication-dependent chromatin assembly and with the HIR complex to promote replication-independent chromatin assembly, which may occur during transcription and DNA repair. May be required for the maintenance of a subset of replication elongation factors, including DNA polymerase epsilon, the RFC complex and PCNA, at stalled replication forks. Also required for RTT109-dependent acetylation of histone H3 on 'Lys-9' and 'Lys-56'. Promotion of RTT109-mediated histone H3 'Lys-56' acetylation is dependent on interactions with histone H3 pre-acetylated on 'Lys-14'. The protein is Histone chaperone ASF1 of Saccharomyces cerevisiae (strain ATCC 204508 / S288c) (Baker's yeast).